The sequence spans 610 residues: Elongation factor 4 (610 aa).

The tr-type G domain maps to 11-193 (EKIRNFSIIA…QIVEKVPAPT (183 aa)). GTP contacts are provided by residues 23 to 28 (DHGKST) and 140 to 143 (NKID).

The protein belongs to the TRAFAC class translation factor GTPase superfamily. Classic translation factor GTPase family. LepA subfamily.

It is found in the cell membrane. The enzyme catalyses GTP + H2O = GDP + phosphate + H(+). Its function is as follows. Required for accurate and efficient protein synthesis under certain stress conditions. May act as a fidelity factor of the translation reaction, by catalyzing a one-codon backward translocation of tRNAs on improperly translocated ribosomes. Back-translocation proceeds from a post-translocation (POST) complex to a pre-translocation (PRE) complex, thus giving elongation factor G a second chance to translocate the tRNAs correctly. Binds to ribosomes in a GTP-dependent manner. The sequence is that of Elongation factor 4 from Streptococcus suis (strain 98HAH33).